We begin with the raw amino-acid sequence, 524 residues long: ORC1-type DNA replication protein 4 (524 aa).

Residues 1-23 are compositionally biased toward polar residues; the sequence is MTDKSNNPAPASDPSTTETSNDA. Positions 1 to 67 are disordered; that stretch reads MTDKSNNPAP…DDPSDEASRG (67 aa). ATP contacts are provided by residues 128–132, Tyr325, and Arg337; that span reads TGKTA.

Belongs to the CDC6/cdc18 family.

Involved in regulation of DNA replication. This chain is ORC1-type DNA replication protein 4 (cdc6d), found in Haloarcula marismortui (strain ATCC 43049 / DSM 3752 / JCM 8966 / VKM B-1809) (Halobacterium marismortui).